We begin with the raw amino-acid sequence, 184 residues long: Tumor necrosis factor alpha-induced protein 8-like protein 2 (184 aa).

Phosphoserine is present on S3.

This sequence belongs to the TNFAIP8 family. TNFAIP8L2 subfamily. As to quaternary structure, may interact with CASP8; however, such result is unclear since could not reproduce the interaction with CASP8. Interacts with RAC1. Post-translationally, phosphorylated by TAK1/MAP3K7; this phosphorylation triggers association with BTRC and subsequent ubiquitination and degradation. Ubiquitinated in a BTRC-depdent manner; leading to degradation mediated through the proteasome pathway. Expressed in thymus, spleen, lymph node and small intestine, but not in liver, heart, muscle, testis, spinal cord or brain. Up-regulated in the spinal cord of mice with experimental autoimmune encephalomyelitis. Constitutively expressed by macrophages, B and T-lymphocytes at various developmental stages.

The protein localises to the cytoplasm. The protein resides in the nucleus. Its subcellular location is the lysosome. Acts as a negative regulator of innate and adaptive immunity by maintaining immune homeostasis. Plays a regulatory role in the Toll-like signaling pathway by determining the strength of LPS-induced signaling and gene expression. Inhibits TCR-mediated T-cell activation and negatively regulate T-cell function to prevent hyperresponsiveness. Also inhibits autolysosome formation via negatively modulating MTOR activation by interacting with RAC1 and promoting the disassociation of the RAC1-MTOR complex. Plays an essential role in NK-cell biology by acting as a checkpoint and displaying an expression pattern correlating with NK-cell maturation process and by negatively regulating NK-cell maturation and antitumor immunity. Mechanistically, suppresses IL-15-triggered mTOR activity in NK-cells. In Mus musculus (Mouse), this protein is Tumor necrosis factor alpha-induced protein 8-like protein 2 (Tnfaip8l2).